Here is a 74-residue protein sequence, read N- to C-terminus: Omwaprin-b (74 aa).

A signal peptide spans 1-24; that stretch reads MSSGGLLLLLGLLTLWEVLTPVSS. Positions 27-71 constitute a WAP domain; it reads RPKKPGLCPPRPQKPCVKECKNDWSCPGQQKCCNYGCIDECRDPI. 4 disulfides stabilise this stretch: Cys34–Cys59, Cys42–Cys63, Cys46–Cys58, and Cys52–Cys67.

Belongs to the venom waprin family. Expressed by the venom gland.

It is found in the secreted. Functionally, damages membranes of susceptible bacteria. Has antibacterial activity against the Gram-positive bacteria B.megaterium and S.warneri. After 45 minutes of treatment with this protein, B.megaterium have no visible pili and are smooth. Has no antibacterial activity against the Gram-positive bacteria B.thuringiensis, S.aureus, S.clavuligerus and B. anthracis, or the Gram-negative bacteria E.coli and A.tumefaciens. Has no hemolytic activity. Does not inhibit the proteinases elastase and cathepsin G. Is not toxic to mice. This is Omwaprin-b from Oxyuranus microlepidotus (Inland taipan).